We begin with the raw amino-acid sequence, 217 residues long: tRNA (guanine-N(7)-)-methyltransferase (217 aa).

S-adenosyl-L-methionine is bound by residues Glu-44, Glu-69, Asp-96, and Asp-118. The active site involves Asp-118. Substrate contacts are provided by residues Lys-122, Asp-154, and 191 to 194 (TEYE).

The protein belongs to the class I-like SAM-binding methyltransferase superfamily. TrmB family.

It carries out the reaction guanosine(46) in tRNA + S-adenosyl-L-methionine = N(7)-methylguanosine(46) in tRNA + S-adenosyl-L-homocysteine. The protein operates within tRNA modification; N(7)-methylguanine-tRNA biosynthesis. Catalyzes the formation of N(7)-methylguanine at position 46 (m7G46) in tRNA. In Bacillus mycoides (strain KBAB4) (Bacillus weihenstephanensis), this protein is tRNA (guanine-N(7)-)-methyltransferase.